Consider the following 411-residue polypeptide: LL-diaminopimelate aminotransferase (411 aa).

Substrate is bound by residues Tyr-15 and Gly-42. Pyridoxal 5'-phosphate-binding positions include Tyr-72, 108–109, Tyr-132, Asn-188, Tyr-219, and 247–249; these read AK and SFS. Residues Lys-109, Tyr-132, and Asn-188 each coordinate substrate. At Lys-250 the chain carries N6-(pyridoxal phosphate)lysine. Pyridoxal 5'-phosphate is bound by residues Arg-258 and Asn-293. Residues Asn-293 and Arg-389 each contribute to the substrate site.

Belongs to the class-I pyridoxal-phosphate-dependent aminotransferase family. LL-diaminopimelate aminotransferase subfamily. As to quaternary structure, homodimer. Pyridoxal 5'-phosphate serves as cofactor.

The enzyme catalyses (2S,6S)-2,6-diaminopimelate + 2-oxoglutarate = (S)-2,3,4,5-tetrahydrodipicolinate + L-glutamate + H2O + H(+). It functions in the pathway amino-acid biosynthesis; L-lysine biosynthesis via DAP pathway; LL-2,6-diaminopimelate from (S)-tetrahydrodipicolinate (aminotransferase route): step 1/1. In terms of biological role, involved in the synthesis of meso-diaminopimelate (m-DAP or DL-DAP), required for both lysine and peptidoglycan biosynthesis. Catalyzes the direct conversion of tetrahydrodipicolinate to LL-diaminopimelate. In Desulfitobacterium hafniense (strain Y51), this protein is LL-diaminopimelate aminotransferase.